A 106-amino-acid polypeptide reads, in one-letter code: Evasin P1168 (106 aa).

A signal peptide spans Met1–Ala24. Intrachain disulfides connect Cys45–Cys67, Cys49–Cys69, and Cys60–Cys80. N-linked (GlcNAc...) asparagine glycosylation is found at Asn48, Asn54, and Asn64.

The protein resides in the secreted. Its function is as follows. Salivary chemokine-binding protein which binds to host chemokines CXCL1, CXCL2 and CXCL8. The protein is Evasin P1168 of Ixodes ricinus (Common tick).